The primary structure comprises 286 residues: Bifunctional protein FolD (286 aa).

NADP(+) is bound by residues glycine 165–serine 167 and serine 190.

The protein belongs to the tetrahydrofolate dehydrogenase/cyclohydrolase family. As to quaternary structure, homodimer.

It carries out the reaction (6R)-5,10-methylene-5,6,7,8-tetrahydrofolate + NADP(+) = (6R)-5,10-methenyltetrahydrofolate + NADPH. It catalyses the reaction (6R)-5,10-methenyltetrahydrofolate + H2O = (6R)-10-formyltetrahydrofolate + H(+). It participates in one-carbon metabolism; tetrahydrofolate interconversion. Its function is as follows. Catalyzes the oxidation of 5,10-methylenetetrahydrofolate to 5,10-methenyltetrahydrofolate and then the hydrolysis of 5,10-methenyltetrahydrofolate to 10-formyltetrahydrofolate. The sequence is that of Bifunctional protein FolD from Paraburkholderia xenovorans (strain LB400).